A 457-amino-acid chain; its full sequence is Proton-translocating ferredoxin:NAD(+) oxidoreductase complex subunit C (457 aa).

2 4Fe-4S ferredoxin-type domains span residues 353-386 (TKNDVNDGKESSCIRCGRCLKACPMHLNPSMLSI) and 396-427 (AKEEYNLLDCVECGSCVYTCPAKRKIVQYIRY). 8 residues coordinate [4Fe-4S] cluster: Cys365, Cys368, Cys371, Cys375, Cys405, Cys408, Cys411, and Cys415. Residues 433 to 457 (RAAGEREKAKAAKAKEKKEKEEVLK) are disordered.

It belongs to the 4Fe4S bacterial-type ferredoxin family. RnfC subfamily. The complex is composed of six subunits: RnfA, RnfB, RnfC, RnfD, RnfE and RnfG. The cofactor is [4Fe-4S] cluster.

It is found in the cell membrane. Functionally, part of a membrane-bound complex that couples electron transfer with translocation of ions across the membrane. Couples electron transfer from reduced ferredoxin to NAD(+) with translocation of H(+) out of the cell. Essential for energy conservation during autotrophic growth. Contributes to ATP synthesis during heterotrophic growth. The sequence is that of Proton-translocating ferredoxin:NAD(+) oxidoreductase complex subunit C from Clostridium ljungdahlii (strain ATCC 55383 / DSM 13528 / PETC).